An 81-amino-acid polypeptide reads, in one-letter code: Large ribosomal subunit protein bL31B (81 aa).

It belongs to the bacterial ribosomal protein bL31 family. Type B subfamily. As to quaternary structure, part of the 50S ribosomal subunit.

In Lactobacillus helveticus (strain DPC 4571), this protein is Large ribosomal subunit protein bL31B.